The sequence spans 418 residues: Phosphatidylcholine:ceramide cholinephosphotransferase 1 (418 aa).

Positions 12–75 (WSPKKVADWL…LDMIETLKME (64 aa)) constitute an SAM domain. At Ser13 the chain carries Phosphoserine. The next 5 membrane-spanning stretches (helical) occupy residues 141–161 (FLAF…ISVV), 189–209 (FSIC…QWLL), 220–240 (FFCI…VTTL), 281–301 (MCGD…YLFI), and 309–329 (LWWY…CILL). His290 is a catalytic residue. Catalysis depends on residues His333 and Asp337. Residues 335–352 (TVDVVVAYYITTRLFWWY) form a helical membrane-spanning segment.

It belongs to the sphingomyelin synthase family. As to expression, widely expressed. Highest expression in the cardiovascular system.

It is found in the golgi apparatus membrane. The enzyme catalyses an N-acylsphing-4-enine + a 1,2-diacyl-sn-glycero-3-phosphocholine = a sphingomyelin + a 1,2-diacyl-sn-glycerol. It carries out the reaction 1-(9Z-octadecenoyl)-2-acyl-sn-3-glycerol + a sphingomyelin = a 1-(9Z-octadecenoyl)-2-acyl-sn-glycero-3-phosphocholine + an N-acylsphing-4-enine. The catalysed reaction is N-hexadecanoylsphinganine + a 1,2-diacyl-sn-glycero-3-phosphocholine = N-hexadecanoyl-sphinganine-1-phosphocholine + a 1,2-diacyl-sn-glycerol. It catalyses the reaction N-hexadecanoyl-(4R)-hydroxysphinganine + a 1,2-diacyl-sn-glycero-3-phosphocholine = N-hexadecanoyl-(4R)-hydroxysphinganine-phosphocholine + a 1,2-diacyl-sn-glycerol. The enzyme catalyses an N-acylsphing-4-enine + a 1,2-diacyl-sn-glycero-3-phosphoethanolamine = an N-acylsphing-4-enine 1-phosphoethanolamine + a 1,2-diacyl-sn-glycerol. It participates in sphingolipid metabolism. Major sphingomyelin synthase at the Golgi apparatus. Catalyzes the reversible transfer of phosphocholine moiety in sphingomyelin biosynthesis: in the forward reaction transfers phosphocholine head group of phosphatidylcholine (PC) on to ceramide (CER) to form ceramide phosphocholine (sphingomyelin, SM) and diacylglycerol (DAG) as by-product, and in the reverse reaction transfers phosphocholine from SM to DAG to form PC and CER. The direction of the reaction depends on the levels of CER and DAG in Golgi membranes. Converts the newly synthesized CER, that is transported from the endoplasmic reticulum to the trans-Golgi by the Cer transport protein (CERT), to SM. Can form a heteromeric complex with glucosylceramide synthase (GCS) increasing SMS activity and reducing glucosylceramide synthesis, a critical mechanism that controls the metabolic fate of CER in the Golgi. Does not use free phosphorylcholine or CDP-choline as donor. Can also transfer phosphoethanolamine head group of phosphatidylethanolamine (PE) on to CER to form ceramide phosphoethanolamine (CPE). Regulates receptor-mediated signal transduction via mitogenic DAG and proapoptotic CER, as well as via SM, a structural component of membrane rafts that serve as platforms for signal transduction and protein sorting. Plays a role in secretory transport via regulation of DAG pool at the Golgi apparatus and its downstream effects on PRKD1. The chain is Phosphatidylcholine:ceramide cholinephosphotransferase 1 (SGMS1) from Sus scrofa (Pig).